We begin with the raw amino-acid sequence, 324 residues long: Taste receptor type 2 member 116 (324 aa).

The Extracellular segment spans residues 1–2; that stretch reads MN. A helical membrane pass occupies residues 3–23; it reads GVLYITFTVILSVEVIIGNFG. The Cytoplasmic segment spans residues 24-55; that stretch reads NGIIALVNIMDLAKRRKISSVDQILTALAISR. A helical transmembrane segment spans residues 56–76; sequence IVLLWLVLVSWWLSMFYPGQW. Topologically, residues 77-94 are extracellular; the sequence is MTEGIDVIVHNVWTTLNQ. A helical transmembrane segment spans residues 95–115; the sequence is ISLWLATSFSVFCFLKVANFS. At 116-128 the chain is on the cytoplasmic side; it reads NTIFFYLKIRVKK. The helical transmembrane segment at 129–149 threads the bilayer; sequence VMTGTLIMFLLLLGLNIIVIN. Residues 150–183 lie on the Extracellular side of the membrane; the sequence is ASKTILIPEYKVNMSNSLNLKNTQISMLFPFANT. Asn162 carries an N-linked (GlcNAc...) asparagine glycan. A helical transmembrane segment spans residues 184-204; that stretch reads LFGFIPFAVSLVTFLLLFFSL. Topologically, residues 205–236 are cytoplasmic; that stretch reads WKHQRKMHHGAQGCRDSSTKAHIRVLQTLIAS. A helical membrane pass occupies residues 237–257; the sequence is ILLYFVFFLSLVVKVWISLFL. Topologically, residues 258 to 261 are extracellular; it reads ERML. A helical transmembrane segment spans residues 262–282; it reads LLLITQAAKIAFPSLHPWVLI. The Cytoplasmic segment spans residues 283 to 324; the sequence is LGNAKLRKASLSALQWLRCRHKDEHRRVQRPEVHSCGSSCMP.

It belongs to the G-protein coupled receptor T2R family.

Its subcellular location is the membrane. Putative taste receptor which may play a role in the perception of bitterness. This Rattus norvegicus (Rat) protein is Taste receptor type 2 member 116.